The primary structure comprises 157 residues: Small ribosomal subunit protein uS7 (157 aa).

The protein belongs to the universal ribosomal protein uS7 family. As to quaternary structure, part of the 30S ribosomal subunit. Contacts proteins S9 and S11.

One of the primary rRNA binding proteins, it binds directly to 16S rRNA where it nucleates assembly of the head domain of the 30S subunit. Is located at the subunit interface close to the decoding center, probably blocks exit of the E-site tRNA. The polypeptide is Small ribosomal subunit protein uS7 (Marinomonas sp. (strain MWYL1)).